A 497-amino-acid polypeptide reads, in one-letter code: Transmembrane protein 200A (497 aa).

Residues 1–61 are Cytoplasmic-facing; the sequence is MIATGGVITG…RGKIRLYSAS (61 aa). Polar residues predominate over residues 20 to 30; sequence TRSQYHLSAQS. A disordered region spans residues 20-44; the sequence is TRSQYHLSAQSPGPAPEKKTTKRKP. A helical transmembrane segment spans residues 62–82; the sequence is GFFLVLGVLILMAGIAMAVLG. Residues 83-127 lie on the Extracellular side of the membrane; it reads YWPHKDQPKAPETKMSANNTQSFGREQAGSIAQFLEQHMHSEKMK. A glycan (N-linked (GlcNAc...) asparagine) is linked at N100. Residues 128–148 traverse the membrane as a helical segment; that stretch reads MLGPFTMGIGIFIFICANAIL. The Cytoplasmic segment spans residues 149 to 497; sequence HENRDRETKV…LKRGTSETRF (349 aa). A compositionally biased stretch (low complexity) spans 353-375; that stretch reads SNSATESASSTSSRSSLSPGSTS. Disordered stretches follow at residues 353-385 and 400-438; these read SNSA…GAAR and HSKS…GYTR. A compositionally biased stretch (basic and acidic residues) spans 427–438; sequence RLDRSNSKGYTR.

The protein belongs to the TMEM200 family.

It localises to the membrane. The protein is Transmembrane protein 200A (tmem200a) of Danio rerio (Zebrafish).